Here is a 393-residue protein sequence, read N- to C-terminus: Dual-specificity RNA methyltransferase RlmN (393 aa).

Glu-114 serves as the catalytic Proton acceptor. The 240-residue stretch at 120–359 (EGDRATLCVS…VIVRKTRGDD (240 aa)) folds into the Radical SAM core domain. A disulfide bridge links Cys-127 with Cys-364. Cys-134, Cys-138, and Cys-141 together coordinate [4Fe-4S] cluster. Residues 188-189 (GE), Ser-220, 242-244 (SLH), and Asn-321 contribute to the S-adenosyl-L-methionine site. Catalysis depends on Cys-364, which acts as the S-methylcysteine intermediate.

This sequence belongs to the radical SAM superfamily. RlmN family. [4Fe-4S] cluster serves as cofactor.

Its subcellular location is the cytoplasm. It catalyses the reaction adenosine(2503) in 23S rRNA + 2 reduced [2Fe-2S]-[ferredoxin] + 2 S-adenosyl-L-methionine = 2-methyladenosine(2503) in 23S rRNA + 5'-deoxyadenosine + L-methionine + 2 oxidized [2Fe-2S]-[ferredoxin] + S-adenosyl-L-homocysteine. The catalysed reaction is adenosine(37) in tRNA + 2 reduced [2Fe-2S]-[ferredoxin] + 2 S-adenosyl-L-methionine = 2-methyladenosine(37) in tRNA + 5'-deoxyadenosine + L-methionine + 2 oxidized [2Fe-2S]-[ferredoxin] + S-adenosyl-L-homocysteine. Functionally, specifically methylates position 2 of adenine 2503 in 23S rRNA and position 2 of adenine 37 in tRNAs. m2A2503 modification seems to play a crucial role in the proofreading step occurring at the peptidyl transferase center and thus would serve to optimize ribosomal fidelity. This chain is Dual-specificity RNA methyltransferase RlmN, found in Haemophilus ducreyi (strain 35000HP / ATCC 700724).